Here is a 166-residue protein sequence, read N- to C-terminus: Tegument protein UL55 homolog (166 aa).

Belongs to the alphaherpesvirinae HHV-1 UL55 family.

Its subcellular location is the virion tegument. The protein localises to the host nucleus matrix. This Gallid herpesvirus 2 (strain Chicken/Md5/ATCC VR-987) (GaHV-2) protein is Tegument protein UL55 homolog (MDV070).